The sequence spans 144 residues: MLKGIHPAISPDLLKILAEMGHGDELVLSDAHFPAHQLHHKVVRADGISINSLLTGIAPLFEFDTYTEAPLIMMQAVEGDSLDPAVEQSYLQTIKSAVGNVPKLARMDRFAFYERAKQAYAVVITGETAKYGNIIIKKGVTPVK.

The active-site Proton donor is H22. Substrate is bound by residues D30, R109, and 131 to 133 (YGN).

Belongs to the RbsD / FucU family. FucU mutarotase subfamily. In terms of assembly, homodecamer.

The protein localises to the cytoplasm. The enzyme catalyses alpha-L-fucose = beta-L-fucose. Its pathway is carbohydrate metabolism; L-fucose metabolism. In terms of biological role, involved in the anomeric conversion of L-fucose. This Histophilus somni (strain 129Pt) (Haemophilus somnus) protein is L-fucose mutarotase.